Consider the following 445-residue polypeptide: E3 ubiquitin-protein ligase MYLIP (445 aa).

The FERM domain occupies 1–279 (MLCYVTRPDA…ETHAFYRCDT (279 aa)). Fe cation-binding residues include Cys360, Cys363, and Cys368. The RING-type zinc finger occupies 387–422 (CMVCCEEEINSTFCPCGHTVCCESCAAQLQSCPVCR). Residues 431–433 (VYL) are critical for homodimerization.

Homodimer. Interacts with the E2 ubiquitin-conjugating enzyme, UBE2D1 (via RING-type zinc finger). Interacts with myosin regulatory light chain (MRLC) and TMEM4. In terms of processing, autoubiquitinated. Ubiquitously expressed.

It is found in the cytoplasm. Its subcellular location is the cell membrane. The enzyme catalyses S-ubiquitinyl-[E2 ubiquitin-conjugating enzyme]-L-cysteine + [acceptor protein]-L-lysine = [E2 ubiquitin-conjugating enzyme]-L-cysteine + N(6)-ubiquitinyl-[acceptor protein]-L-lysine.. It functions in the pathway protein modification; protein ubiquitination. With respect to regulation, can bind 1 iron ion per dimer. Iron binding seems to decrease LDLR degradation activity. In terms of biological role, E3 ubiquitin-protein ligase that mediates ubiquitination and subsequent proteasomal degradation of myosin regulatory light chain (MRLC), LDLR, VLDLR and LRP8. Activity depends on E2 enzymes of the UBE2D family. Proteasomal degradation of MRLC leads to inhibit neurite outgrowth in presence of NGF by counteracting the stabilization of MRLC by saposin-like protein (CNPY2/MSAP) and reducing CNPY2-stimulated neurite outgrowth. Acts as a sterol-dependent inhibitor of cellular cholesterol uptake by mediating ubiquitination and subsequent degradation of LDLR. The chain is E3 ubiquitin-protein ligase MYLIP (MYLIP) from Homo sapiens (Human).